A 953-amino-acid polypeptide reads, in one-letter code: Atromentin synthetase invA5 (953 aa).

The segment at 37-460 (SRAVSQYPDH…SGRIKDTVIV (424 aa)) is adenylation (A) domain. A Carrier domain is found at 592–670 (APSTETEKTL…SLAKYVDSLI (79 aa)). The segment at 597–667 (TEKTLAGIYA…VISSLAKYVD (71 aa)) is thiolation and peptide carrier (T) domain. At Ser629 the chain carries O-(pantetheine 4'-phosphoryl)serine. Residues 693–795 (PIFMVHPGVG…FTGLINIPPN (103 aa)) form a thioesterase (TE) domain region.

Belongs to the ATP-dependent AMP-binding enzyme family.

The protein operates within secondary metabolite biosynthesis. Functionally, an L-tyrosine:2-oxoglutarate aminotransferase (probably invD) and atromentin synthetase invA5 catalyze consecutive steps to turn over L-tyrosine into atromentin, which represents the generic precursor molecule for the entire terphenylquinone and pulvinic acid family of pigments, which are widely distributed secondary metabolites in homobasidiomycetes. The first step catalyzed by the aminotransferase converts L-tyrosine in to 4-hydroxyphenylpyruvate (4-HPP). Adenylation of two 4-HPP monomers by the invA5 adenylation (A) domain, covalent tethering of the monomers as a thioester and oxoester onto the invA5 thiolation (T) and thioesterase (TE) domains, respectively, and symmetric C-C-bond formation between two monomers catalyzed by the invA5 TE domain leads to atromentin. The protein is Atromentin synthetase invA5 (invA5) of Paxillus involutus (Naked brimcap).